The chain runs to 1199 residues: Nucleolar protein 6 (1199 aa).

Residues 1–10 (MLRNKRKAGK) are compositionally biased toward basic residues. Disordered stretches follow at residues 1 to 51 (MLRN…EPKP) and 1146 to 1199 (KREQ…KALK). Composition is skewed to basic and acidic residues over residues 28 to 37 (HAEDHSDLEH) and 1146 to 1169 (KREQ…EKST).

Belongs to the NRAP family. As to quaternary structure, part of the small subunit (SSU) processome, composed of more than 70 proteins and the RNA chaperone small nucleolar RNA (snoRNA) U3.

Its subcellular location is the nucleus. It is found in the nucleolus. The protein localises to the chromosome. Its function is as follows. Part of the small subunit (SSU) processome, first precursor of the small eukaryotic ribosomal subunit. During the assembly of the SSU processome in the nucleolus, many ribosome biogenesis factors, an RNA chaperone and ribosomal proteins associate with the nascent pre-rRNA and work in concert to generate RNA folding, modifications, rearrangements and cleavage as well as targeted degradation of pre-ribosomal RNA by the RNA exosome. This chain is Nucleolar protein 6, found in Drosophila yakuba (Fruit fly).